A 130-amino-acid polypeptide reads, in one-letter code: Small ribosomal subunit protein uS11 (130 aa).

It belongs to the universal ribosomal protein uS11 family. As to quaternary structure, part of the 30S ribosomal subunit. Interacts with proteins S7 and S18. Binds to IF-3.

Its function is as follows. Located on the platform of the 30S subunit, it bridges several disparate RNA helices of the 16S rRNA. Forms part of the Shine-Dalgarno cleft in the 70S ribosome. This chain is Small ribosomal subunit protein uS11, found in Microcystis aeruginosa (strain NIES-843 / IAM M-2473).